A 390-amino-acid polypeptide reads, in one-letter code: Chorismate synthase (390 aa).

NADP(+)-binding residues include arginine 39 and arginine 45. FMN-binding positions include arginine 132–serine 134, asparagine 253–alanine 254, glycine 298, lysine 313–threonine 317, and arginine 339.

It belongs to the chorismate synthase family. Homotetramer. Requires FMNH2 as cofactor.

It catalyses the reaction 5-O-(1-carboxyvinyl)-3-phosphoshikimate = chorismate + phosphate. It functions in the pathway metabolic intermediate biosynthesis; chorismate biosynthesis; chorismate from D-erythrose 4-phosphate and phosphoenolpyruvate: step 7/7. Functionally, catalyzes the anti-1,4-elimination of the C-3 phosphate and the C-6 proR hydrogen from 5-enolpyruvylshikimate-3-phosphate (EPSP) to yield chorismate, which is the branch point compound that serves as the starting substrate for the three terminal pathways of aromatic amino acid biosynthesis. This reaction introduces a second double bond into the aromatic ring system. In Bacillus pumilus (strain SAFR-032), this protein is Chorismate synthase.